A 193-amino-acid polypeptide reads, in one-letter code: MIDYILLIISTALINNFVLVKFLGLCPFMGVSKKIETAIGMGLATMFVLTVASLCAYLVERYLLTPLHANFLRTLIFILVIAVVVQFTEMVIHKTSPTLYRLLGIFLPLITTNCAVLGVALLNINLAHNLTQSVIYGFSASLGFSLVLVLFAALRERLTAADIPLPFRGASIALITAGLMSLAFMGFSGLVRV.

A run of 6 helical transmembrane segments spans residues 5–25 (ILLIISTALINNFVLVKFLGL), 39–59 (IGMGLATMFVLTVASLCAYLV), 72–92 (LRTLIFILVIAVVVQFTEMVI), 102–122 (LLGIFLPLITTNCAVLGVALL), 134–154 (VIYGFSASLGFSLVLVLFAAL), and 171–191 (SIALITAGLMSLAFMGFSGLV).

This sequence belongs to the NqrDE/RnfAE family. In terms of assembly, the complex is composed of six subunits: RnfA, RnfB, RnfC, RnfD, RnfE and RnfG.

It localises to the cell inner membrane. Part of a membrane-bound complex that couples electron transfer with translocation of ions across the membrane. In Histophilus somni (strain 2336) (Haemophilus somnus), this protein is Ion-translocating oxidoreductase complex subunit A.